The following is a 209-amino-acid chain: Thymidylate kinase (209 aa).

ATP is bound at residue G10–T17.

The protein belongs to the thymidylate kinase family.

It carries out the reaction dTMP + ATP = dTDP + ADP. In terms of biological role, phosphorylation of dTMP to form dTDP in both de novo and salvage pathways of dTTP synthesis. The chain is Thymidylate kinase from Pediococcus pentosaceus (strain ATCC 25745 / CCUG 21536 / LMG 10740 / 183-1w).